The following is a 47-amino-acid chain: PhoP/PhoQ regulator MgrB (47 aa).

Residues 6–26 (WVVLVVVVLACLLLWAQVFNM) traverse the membrane as a helical segment.

Belongs to the MgrB family. As to quaternary structure, may form homooligomers. Probably interacts with the periplasmic domain of PhoQ.

The protein resides in the cell inner membrane. In terms of biological role, phoP-regulated transcription is redox-sensitive, being activated when the periplasm becomes more reducing. MgrB acts between DsbA/DsbB and PhoP/PhoQ in this pathway. Represses PhoP/PhoQ signaling, possibly by binding to the periplasmic domain of PhoQ, altering its activity and that of downstream effector PhoP. This is PhoP/PhoQ regulator MgrB from Escherichia coli O157:H7.